The primary structure comprises 307 residues: Cysteine synthase (307 aa).

Residue K42 is modified to N6-(pyridoxal phosphate)lysine. Residues N72, 176–180 (GTGGH), and S263 contribute to the pyridoxal 5'-phosphate site.

It belongs to the cysteine synthase/cystathionine beta-synthase family. Pyridoxal 5'-phosphate serves as cofactor.

The catalysed reaction is O-acetyl-L-serine + hydrogen sulfide = L-cysteine + acetate. It functions in the pathway amino-acid biosynthesis; L-cysteine biosynthesis; L-cysteine from L-serine: step 2/2. The sequence is that of Cysteine synthase (cysK) from Flavobacterium sp. (strain K3-15 / DSM ID92-509).